Reading from the N-terminus, the 751-residue chain is Zinc finger protein 184 (751 aa).

The 72-residue stretch at 28-99 folds into the KRAB domain; that stretch reads VTFKDVIVDF…EPSIPVGTCA (72 aa). Residues S117, S122, and S199 each carry the phosphoserine modification. Residues 191-202 are compositionally biased toward polar residues; it reads SNLVTQEPSPEE. Residues 191–212 are disordered; the sequence is SNLVTQEPSPEETSTKRSIKQN. A Glycyl lysine isopeptide (Lys-Gly) (interchain with G-Cter in SUMO2) cross-link involves residue K206. C2H2-type zinc fingers lie at residues 222 to 244, 250 to 272, 278 to 300, 306 to 328, 334 to 356, 362 to 384, 390 to 412, 418 to 440, 446 to 468, 474 to 496, 502 to 524, 530 to 552, 558 to 580, 586 to 608, 614 to 636, 642 to 664, 670 to 692, 698 to 720, and 726 to 748; these read CKCN…QRTH, YKCN…QRIH, YKCD…QRIH, YTCN…QKIH, FKCD…QKIH, YKCN…HMIH, YECN…QKTH, YDCA…LKIH, YKCN…RRIH, FECS…QKTH, YECK…ERIH, YQCH…RKIH, YKCN…KRIH, YECA…QKTH, YQCN…QRIH, YKCN…QNTH, YNCN…QRIH, and FGCN…QRLH.

Belongs to the krueppel C2H2-type zinc-finger protein family. In terms of tissue distribution, predominant expression in testis.

The protein resides in the nucleus. In terms of biological role, may be involved in transcriptional regulation. This is Zinc finger protein 184 (ZNF184) from Homo sapiens (Human).